The following is a 567-amino-acid chain: Urease subunit alpha (567 aa).

The region spanning 129–567 (GGIDTHIHWI…LPMAQRYFLF (439 aa)) is the Urease domain. Residues His-134, His-136, and Lys-217 each contribute to the Ni(2+) site. Position 217 is an N6-carboxylysine (Lys-217). His-219 is a substrate binding site. Residues His-246 and His-272 each contribute to the Ni(2+) site. His-320 (proton donor) is an active-site residue. Ni(2+) is bound at residue Asp-360.

Belongs to the metallo-dependent hydrolases superfamily. Urease alpha subunit family. Heterotrimer of UreA (gamma), UreB (beta) and UreC (alpha) subunits. Three heterotrimers associate to form the active enzyme. The apoenzyme interacts with an accessory complex composed of UreD, UreF and UreG, which is required for the assembly of the nickel containing metallocenter of UreC. The UreE protein may also play a direct role as a metallochaperone in nickel transfer to the urease apoprotein. The cofactor is Ni cation. Post-translationally, carboxylation allows a single lysine to coordinate two nickel ions.

The protein resides in the cytoplasm. It catalyses the reaction urea + 2 H2O + H(+) = hydrogencarbonate + 2 NH4(+). It participates in nitrogen metabolism; urea degradation; CO(2) and NH(3) from urea (urease route): step 1/1. With respect to regulation, the apoenzyme can be activated in vitro in the presence of nickel ions and carbon dioxide, which promotes carboxylation of Lys-217. The chain is Urease subunit alpha from Klebsiella aerogenes (Enterobacter aerogenes).